A 295-amino-acid polypeptide reads, in one-letter code: uncharacterized protein (295 aa).

In terms of domain architecture, HTH lysR-type spans 1 to 58 (MESGDLRVFQMVAREGTITKAALQLGYVQSNVTARIQQLEAELGTTLFLRHNRGMTLS). The H-T-H motif DNA-binding region spans 18–37 (ITKAALQLGYVQSNVTARIQ).

It belongs to the LysR transcriptional regulatory family.

This is an uncharacterized protein from Bacillus subtilis (strain 168).